Here is an 822-residue protein sequence, read N- to C-terminus: Nucleolar complex protein 3 (822 aa).

Disordered regions lie at residues 1 to 86, 106 to 142, and 172 to 199; these read MGTK…DGDD, ANKRKRKAKTTGENDPDQGQSIGLERAYASDTKKEQD, and KPKQKKKNEEEEEDDSEEDGDTEYEDSD. Over residues 13–23 the composition is skewed to basic residues; that stretch reads RAAHLKSKKTP. Positions 35–45 are enriched in basic and acidic residues; it reads KRDQLKSKREQ. The Nuclear localization signal motif lies at 41 to 48; sequence SKREQGQN. The span at 76-86 shows a compositional bias: acidic residues; the sequence is PLEEDNEDGDD. Residues 116-126 are compositionally biased toward polar residues; the sequence is TGENDPDQGQS. A compositionally biased stretch (acidic residues) spans 181-199; the sequence is EEEEDDSEEDGDTEYEDSD. Ser-187 bears the Phosphoserine mark. Thr-193 is modified (phosphothreonine). Phosphoserine is present on Ser-198. The stretch at 445-509 forms a coiled coil; the sequence is KIKNVNLDAE…NKQAKHQKLT (65 aa).

This sequence belongs to the CBF/MAK21 family.

The protein localises to the nucleus. It is found in the nucleolus. This is Nucleolar complex protein 3 from Drosophila melanogaster (Fruit fly).